The primary structure comprises 670 residues: Acetyl-coenzyme A synthetase (670 aa).

CoA-binding positions include 211-214 (RGGK) and Thr329. ATP-binding positions include 404-406 (GEP), 428-433 (DTYWQT), Asp519, and Arg534. CoA is bound at residue Ser542. ATP is bound at residue Arg545. Arg603 serves as a coordination point for CoA.

The protein belongs to the ATP-dependent AMP-binding enzyme family.

The catalysed reaction is acetate + ATP + CoA = acetyl-CoA + AMP + diphosphate. This is Acetyl-coenzyme A synthetase (facA) from Emericella nidulans (strain FGSC A4 / ATCC 38163 / CBS 112.46 / NRRL 194 / M139) (Aspergillus nidulans).